Consider the following 505-residue polypeptide: T-cell activation inhibitor, mitochondrial (505 aa).

The stretch at 216-243 (LKNSLPLRKELDRLKNELSELLQLSDIR) forms a coiled coil.

Expressed in peripheral blood leukocytes, mainly in T-lymphocytes.

The protein resides in the mitochondrion. In terms of biological role, may regulate T-cell apoptosis. This is T-cell activation inhibitor, mitochondrial (Tcaim) from Rattus norvegicus (Rat).